Here is a 101-residue protein sequence, read N- to C-terminus: Chaperone modulatory protein CbpM (101 aa).

This sequence belongs to the CbpM family.

Functionally, interacts with CbpA and inhibits both the DnaJ-like co-chaperone activity and the DNA binding activity of CbpA. Together with CbpA, modulates the activity of the DnaK chaperone system. Does not inhibit the co-chaperone activity of DnaJ. The sequence is that of Chaperone modulatory protein CbpM from Salmonella agona (strain SL483).